Here is an 82-residue protein sequence, read N- to C-terminus: UPF0729 protein C18orf32 homolog (82 aa).

The tract at residues M1–P37 is necessary for its localzation to the endoplasmic reticulum and lipid droplets. The disordered stretch occupies residues T46–D82. Residues N54 to V69 show a composition bias toward polar residues. The span at R71–D82 shows a compositional bias: basic and acidic residues.

The protein belongs to the UPF0729 family.

Its subcellular location is the endoplasmic reticulum. The protein localises to the lipid droplet. This chain is UPF0729 protein C18orf32 homolog, found in Xenopus tropicalis (Western clawed frog).